Here is a 177-residue protein sequence, read N- to C-terminus: Large ribosomal subunit protein uL6 (177 aa).

This sequence belongs to the universal ribosomal protein uL6 family. As to quaternary structure, part of the 50S ribosomal subunit.

In terms of biological role, this protein binds to the 23S rRNA, and is important in its secondary structure. It is located near the subunit interface in the base of the L7/L12 stalk, and near the tRNA binding site of the peptidyltransferase center. In Pseudomonas entomophila (strain L48), this protein is Large ribosomal subunit protein uL6.